Here is a 443-residue protein sequence, read N- to C-terminus: MTSQFASLWQQSLEILKQELKPASFDTWLKNTQLVTIQNGEAHIGVPNDLARDWLENRYATLVKNALSVVLGESVEVRFFTPSADSRRSEPSRRPVATEESSPPLLNPKYTFDTFVVGNSNRFAHAAALAVAEAPAKAYNPLFVYGGVGLGKTHLMQAIGHFVIEQHPQSRVVYVSSEKFTNELINAIRDDKTVEFRNRYRNIDVLLIDDIQFLAGKERTQEEFFHTFNALHESSKQIIISSDRPPKEIPTLEDRLRSRFEWGLITDINPPDLETRIAILRKKAILENLDVPNEVMVFIANIIQSNIRELEGALNRVIAYANLSGKSLTSEVAEEALKNIIPSHRAKVITIALIQEIVAEHYNMRVEDFKAKKRTRDVAFPRQIAMYLSREMLDVSLPKIGEEFGGRDHTTVIHAHEKITKDIEKDPQLEMTIQVLKEKIQRA.

A domain I, interacts with DnaA modulators region spans residues 1-80; that stretch reads MTSQFASLWQ…LGESVEVRFF (80 aa). The domain II stretch occupies residues 80–104; that stretch reads FTPSADSRRSEPSRRPVATEESSPP. Positions 83 to 105 are disordered; it reads SADSRRSEPSRRPVATEESSPPL. The segment covering 85–97 has biased composition (basic and acidic residues); sequence DSRRSEPSRRPVA. A domain III, AAA+ region region spans residues 105–321; sequence LLNPKYTFDT…GALNRVIAYA (217 aa). ATP contacts are provided by Gly149, Gly151, Lys152, and Thr153. The interval 322–443 is domain IV, binds dsDNA; the sequence is NLSGKSLTSE…QVLKEKIQRA (122 aa).

The protein belongs to the DnaA family. In terms of assembly, oligomerizes as a right-handed, spiral filament on DNA at oriC.

The protein localises to the cytoplasm. In terms of biological role, plays an essential role in the initiation and regulation of chromosomal replication. ATP-DnaA binds to the origin of replication (oriC) to initiate formation of the DNA replication initiation complex once per cell cycle. Binds the DnaA box (a 9 base pair repeat at the origin) and separates the double-stranded (ds)DNA. Forms a right-handed helical filament on oriC DNA; dsDNA binds to the exterior of the filament while single-stranded (ss)DNA is stabiized in the filament's interior. The ATP-DnaA-oriC complex binds and stabilizes one strand of the AT-rich DNA unwinding element (DUE), permitting loading of DNA polymerase. After initiation quickly degrades to an ADP-DnaA complex that is not apt for DNA replication. Binds acidic phospholipids. This chain is Chromosomal replication initiator protein DnaA, found in Heliobacterium modesticaldum (strain ATCC 51547 / Ice1).